Consider the following 115-residue polypeptide: uncharacterized protein (115 aa).

Transmembrane regions (helical) follow at residues 23–43, 63–83, and 90–110; these read LVYAALAFVGGFAVWFSLFFA, AMVTMWIGVGAVLLLTLVVMV, and NVVIGWPFVGLLALGLVYVAA.

The protein localises to the cell membrane. This is an uncharacterized protein from Mycobacterium bovis (strain ATCC BAA-935 / AF2122/97).